The chain runs to 378 residues: Deoxyguanosinetriphosphate triphosphohydrolase-like protein (378 aa).

The tract at residues 1-28 (MLAPYACQPGESRGRQQPESMSTFRSPF) is disordered. The segment covering 15-26 (RQQPESMSTFRS) has biased composition (polar residues). One can recognise an HD domain in the interval 62-198 (RLTHSIEVAQ…AAIADDVAYS (137 aa)).

Belongs to the dGTPase family. Type 2 subfamily.

The polypeptide is Deoxyguanosinetriphosphate triphosphohydrolase-like protein (Cereibacter sphaeroides (strain ATCC 17025 / ATH 2.4.3) (Rhodobacter sphaeroides)).